Here is a 274-residue protein sequence, read N- to C-terminus: 2,3,4,5-tetrahydropyridine-2,6-dicarboxylate N-succinyltransferase (274 aa).

2 residues coordinate substrate: Arg104 and Asp141.

It belongs to the transferase hexapeptide repeat family. In terms of assembly, homotrimer.

Its subcellular location is the cytoplasm. The enzyme catalyses (S)-2,3,4,5-tetrahydrodipicolinate + succinyl-CoA + H2O = (S)-2-succinylamino-6-oxoheptanedioate + CoA. The protein operates within amino-acid biosynthesis; L-lysine biosynthesis via DAP pathway; LL-2,6-diaminopimelate from (S)-tetrahydrodipicolinate (succinylase route): step 1/3. The polypeptide is 2,3,4,5-tetrahydropyridine-2,6-dicarboxylate N-succinyltransferase (Shewanella pealeana (strain ATCC 700345 / ANG-SQ1)).